We begin with the raw amino-acid sequence, 428 residues long: MGKILIKDCTIVPISGPVIGKGVIAINDDRLHYVGPAGGLPAGWQADTVIDAGDMVALPGLVNAHTHAAMTLLRSYADDLPLKQWLEEKIWPREDRLEREDIYWGSKIALLEMIRSGTTTFADMYFHMDAVAGAVVEAGLRASLCQGLIGLQDTSNKRLEAGISMVKEWHGAGEGRITTMLGPHAPNTCTPEYLTRVAETAAGLGVGLHIHLAETRGEVEDVKARYGATPVALVNKLGLLDLPVLAAHCVHLTTEEIAILAEKKVGVAHCPESNLKLASGVAPVKEMLAAGVNVAIGTDGASSNNNLDMVAETRTAALLAKGITGDPTVVPAHQALVMATLNGARALGLEKEIGTLEAGKKADLILVDMRQPHLMPPNDVEANLVYAARGSDVDTVIVNGKILMARGEVKTLDAEEIYAQVTKRMHKG.

His65 and His67 together coordinate Zn(2+). 3 residues coordinate substrate: Glu94, Arg158, and His184. His211 is a Zn(2+) binding site. Substrate is bound by residues Glu214 and Asp299. Asp299 lines the Zn(2+) pocket.

This sequence belongs to the metallo-dependent hydrolases superfamily. MTA/SAH deaminase family. The cofactor is Zn(2+).

The enzyme catalyses S-adenosyl-L-homocysteine + H2O + H(+) = S-inosyl-L-homocysteine + NH4(+). The catalysed reaction is S-methyl-5'-thioadenosine + H2O + H(+) = S-methyl-5'-thioinosine + NH4(+). Functionally, catalyzes the deamination of 5-methylthioadenosine and S-adenosyl-L-homocysteine into 5-methylthioinosine and S-inosyl-L-homocysteine, respectively. Is also able to deaminate adenosine. This Moorella thermoacetica (strain ATCC 39073 / JCM 9320) protein is 5-methylthioadenosine/S-adenosylhomocysteine deaminase.